Here is a 569-residue protein sequence, read N- to C-terminus: Vacuolar protein sorting-associated protein 45 homolog (569 aa).

It belongs to the STXBP/unc-18/SEC1 family. Interacts with both SYP41 or SYP42 and VTI12, but in different domains of the trans-Golgi network. Does not interact on the pervacuolar compartment with VTI11, SYP21 or SYP22, or on the cis-Golgi with SYP31. Interacts at the trans-Golgi network (TGN) with the SYP41/SYP61/VTI12 SNARE complex. As to expression, highly expressed in roots, lower expression in leaves, stems and flowers.

Its subcellular location is the golgi apparatus. It is found in the trans-Golgi network membrane. The protein localises to the early endosome. Its function is as follows. Involved in the protein transport to the vacuole, probably at the level of vesicle fusion at the trans-Golgi network (TGN) and not in transport from the TGN to the prevacuolar compartment, by promoting the recycling of vacuolar sorting receptors back to the TGN. Involved in early endosomal vesicle trafficking, particularly at the trans-Golgi-network/early endosome (TGN/EE) thus residing in early endocytic route. Together with BIG5/BEN1 required for polar PIN-FORMED (PIN) proteins localization, for their dynamic repolarization, and consequently for auxin activity gradient formation and auxin-related developmental processes (e.g. embryonic patterning, organogenesis and vasculature venation patterning). Necessary for pollen germination and for cell expansion. Binds syntaxins. The chain is Vacuolar protein sorting-associated protein 45 homolog from Arabidopsis thaliana (Mouse-ear cress).